Consider the following 486-residue polypeptide: MFLNRGKSKKNLGAIALAGMVISSMIGGGIFSLPQNMAASAGAGAIILAWLLTGIGMFFIANTFKILSLVRPDLTTGIYMYSREGFGPYVGFTIGWGYWLCQIFGNVGYAVMTMDALNYFFPPYFKGGNTIPAIIGGSILIWVFNFIVLKGIRQASFINIIGTVCKLVPLIVFIIITAFAFKLAIFKTDFWGDAVTKTQPALGSVTSQLKSTMLVTLWAFIGIEGAVVMSARAKSPSAVGKATLLGFVGCLTVYILLSILPFGSLFQYQLAGIPNPSTAGVLGMLVGRWGEILMNVGLLIAILSSWLSWTIIVAEIPYTAATNGTFPEIFAIENAQHSPKLSLYITSALMQITMLFVYFSTNAWNTMLSITGVMVLPAYLASAAFLFQFSKNKKYPNKGPVKSYIAKYTGFFAVIYSLWLIYAGGLNYLLMSVILLALGIPFYIDAGKKSKREKTFFAKKEVTKIIIIALLALLAIFLFSTEKIRL.

Helical transmembrane passes span 12–32, 41–61, 85–105, 129–149, 160–180, 211–231, 242–262, 296–316, 341–361, 367–387, 418–438, and 461–481; these read LGAIALAGMVISSMIGGGIFS, AGAGAIILAWLLTGIGMFFIA, GFGPYVGFTIGWGYWLCQIFG, NTIPAIIGGSILIWVFNFIVL, IIGTVCKLVPLIVFIIITAFA, STMLVTLWAFIGIEGAVVMSA, ATLLGFVGCLTVYILLSILPF, VGLLIAILSSWLSWTIIVAEI, LSLYITSALMQITMLFVYFST, MLSITGVMVLPAYLASAAFLF, LWLIYAGGLNYLLMSVILLAL, and EVTKIIIIALLALLAIFLFST.

It belongs to the amino acid-polyamine-organocation (APC) superfamily. Basic amino acid/polyamine antiporter (APA) (TC 2.A.3.2) family.

The protein localises to the cell inner membrane. In terms of biological role, catalyzes the exchange of L-arginine for agmatine. The arginine uptake by the bacterium in the macrophage may be a virulence factor against the host innate immune response. The chain is Arginine/agmatine antiporter (aaxC) from Chlamydia caviae (strain ATCC VR-813 / DSM 19441 / 03DC25 / GPIC) (Chlamydophila caviae).